We begin with the raw amino-acid sequence, 1085 residues long: Extracellular calcium-sensing receptor (1085 aa).

An N-terminal signal peptide occupies residues 1-19 (MALYSCCWILLAFSTWCTS). Over 20–611 (AYGPDQRAQK…KEIEFLSWTE (592 aa)) the chain is Extracellular. The interval 23–189 (PDQRAQKKGD…QFKSFLRTIP (167 aa)) is ligand-binding 1 (LB1). An intrachain disulfide couples Cys-61 to Cys-102. 67-71 (RGFRW) is a binding site for phosphate. Residues Ile-82, Ser-85, Leu-88, and Leu-89 each contribute to the Ca(2+) site. Asn-91 carries N-linked (GlcNAc...) asparagine glycosylation. Thr-101 is a binding site for Ca(2+). A glycan (N-linked (GlcNAc...) asparagine) is linked at Asn-131. Thr-146 contacts Ca(2+). Positions 148, 169, and 171 each coordinate L-tryptophan. Ca(2+) contacts are provided by Ser-171, Pro-189, Asp-191, Glu-232, and Asp-235. The interval 190–325 (NDEHQATAMA…GGTIGFGLKA (136 aa)) is ligand-binding 2 (LB2). Cystine bridges form between Cys-237–Cys-562, Cys-359–Cys-396, Cys-438–Cys-450, Cys-543–Cys-563, Cys-547–Cys-566, Cys-569–Cys-583, and Cys-586–Cys-599. 2 residues coordinate spermine: Asp-239 and Ser-241. Asn-262 and Asn-288 each carry an N-linked (GlcNAc...) asparagine glycan. Residue Glu-298 participates in Ca(2+) binding. Glu-298 contacts L-tryptophan. N-linked (GlcNAc...) asparagine glycosylation is present at Asn-401. 416 to 418 (RIS) provides a ligand contact to phosphate. Residues Asn-447, Asn-469, and Asn-489 are each glycosylated (N-linked (GlcNAc...) asparagine). Tyr-490 contacts Ca(2+). The N-linked (GlcNAc...) asparagine glycan is linked to Asn-542. Residues 543–613 (CSRDCLAGTR…IEFLSWTEPF (71 aa)) are cysteine-rich (CR). A Ca(2+)-binding site is contributed by Gly-558. A glycan (N-linked (GlcNAc...) asparagine) is linked at Asn-595. Residues 612-637 (PFGIALTLFAVLGIFLTAFVLGVFIK) form a helical membrane-spanning segment. Over 638 to 649 (FRNTPIVKATNR) the chain is Cytoplasmic. The intracellular loop 1 (ICL1) stretch occupies residues 638–649 (FRNTPIVKATNR). The helical transmembrane segment at 650–669 (ELSYLLLFSLLCCFSSSLFF) threads the bilayer. The Extracellular segment spans residues 670–675 (IGEPQD). The chain crosses the membrane as a helical span at residues 676–699 (WTCRLRQPAFGISFVLCISCILVK). The Cytoplasmic portion of the chain corresponds to 700 to 723 (TNRVLLVFEAKIPTSFHRKWWGLN). The tract at residues 700–723 (TNRVLLVFEAKIPTSFHRKWWGLN) is intracellular loop 2 (ICL2). The helical transmembrane segment at 724-746 (LQFLLVFLCTFMQIVICAIWLNT) threads the bilayer. Residues 747-770 (APPSSYRNHELEDEIIFITCHEGS) lie on the Extracellular side of the membrane. The chain crosses the membrane as a helical span at residues 771 to 790 (LMALGFLIGYTCLLAAICFF). Topologically, residues 791–806 (FAFKSRKLPENFNEAK) are cytoplasmic. The intracellular loop 3 (ICL3) stretch occupies residues 791 to 806 (FAFKSRKLPENFNEAK). The helical transmembrane segment at 807–829 (FITFSMLIFFIVWISFIPAYAST) threads the bilayer. Topologically, residues 830–833 (YGKF) are extracellular. The chain crosses the membrane as a helical span at residues 834-855 (VSAVEVIAILAASFGLLACIFF). Topologically, residues 856 to 1085 (NKVYIILFKP…STVTENMLRS (230 aa)) are cytoplasmic. Positions 856 to 1085 (NKVYIILFKP…STVTENMLRS (230 aa)) are C-terminus. The interaction with RNF19A stretch occupies residues 881–901 (AFKVAARATLRRSNVSRQRSS). Phosphothreonine is present on Thr-889. The tract at residues 891–899 (RRSNVSRQR) is arginine-rich retention motif. A phosphoserine mark is found at Ser-893, Ser-900, and Ser-921. A compositionally biased stretch (low complexity) spans 893–938 (SNVSRQRSSSLGGSTGSTPSSSISSKSNSEDPFPQQQPKRQKQPQP). Disordered regions lie at residues 893–969 (SNVS…PPRC) and 1034–1058 (SQETGLQGPVGEDHQLEMEDPEEMS). Residues 950–960 (QPRPPSTPQPQ) show a composition bias toward pro residues. Residue Ser-1068 is modified to Phosphoserine.

This sequence belongs to the G-protein coupled receptor 3 family. As to quaternary structure, homodimer; disulfide-linked. Interacts with VCP. Interacts with ARRB1. Post-translationally, phosphorylation at Thr-889 by PKC impairs coupling with G(q)/G(11) G-proteins, while it does not affect G(i)/G(o)-coupling. Phosphorylation at Ser-893 by PKC and Ser-900 by PKA promote plasma membrane localization. In terms of processing, ubiquitinated by RNF19A; which induces proteasomal degradation.

The protein localises to the cell membrane. Its activity is regulated as follows. In resting state, adopts an open conformation, anion-binding promoting the inactive configuration. Upon aromatic amino acid-binding, the groove in the extracellular venus flytrap module is closed, thereby inducing the formation of a novel homodimer interface between subunits. Calcium ions stabilize the active state by enhancing homodimer interactions between membrane-proximal domains to fully activate the receptor. Upon activation, the homodimer adopts an asymmetric configuration of the 7-transmembrane region that primes one protomer for G-protein coupling. G-protein binding expands the transmembrane dimer interface; the restriction imposed by the receptor dimer, in combination with intracellular loop 2 (ICL2), enables G-protein activation by facilitating conformational transition of G-protein alpha. Coupling to different classes of G-proteins results in distinct CASR-G-protein interfaces. G-protein-coupled receptor that senses changes in the extracellular concentration of calcium ions and plays a key role in maintaining calcium homeostasis. Senses fluctuations in the circulating calcium concentration: activated by elevated circulating calcium, leading to decreased parathyroid hormone (PTH) secretion in parathyroid glands. In kidneys, acts as a key regulator of renal tubular calcium resorption. Ligand binding causes a conformation change that triggers signaling via guanine nucleotide-binding proteins (G-proteins) and modulates the activity of downstream effectors. CASR is coupled with different G(q)/G(11), G(i)/G(o)- or G(s)-classes of G-proteins depending on the context. In the parathyroid and kidney, CASR signals through G(q)/G(11) and G(i)/G(o) G-proteins: G(q)/G(11) coupling activates phospholipase C-beta, releasing diacylglycerol (DAG) and inositol 1,4,5-trisphosphate (IP3) second messengers, while G(i)/G(o) coupling mediates inhibition of adenylate cyclase activity. The G-protein-coupled receptor activity is activated by a co-agonist mechanism: aromatic amino acids, such as Trp or Phe, act concertedly with divalent cations, such as calcium or magnesium, to achieve full receptor activation. Acts as an activator of the NLRP3 inflammasome via G(i)/G(o)-mediated signaling: down-regulation of cyclic AMP (cAMP) relieving NLRP3 inhibition by cAMP. Acts as a regulator of proton-sensing receptor GPR68 in a seesaw manner: CASR-mediated signaling inhibits GPR68 signaling in response to extracellular calcium, while GPR68 inhibits CASR in presence of extracellular protons. The protein is Extracellular calcium-sensing receptor (CASR) of Bos taurus (Bovine).